Here is a 150-residue protein sequence, read N- to C-terminus: Cytochrome c oxidase subunit 5A, mitochondrial (150 aa).

A mitochondrion-targeting transit peptide spans 1-41 (MLGAALRRCAVAATAWAGPRGLLHSAPTPGPAAAIHSVRCY). The short motif at 2 to 17 (LGAALRRCAVAATAWA) is the SIFI-degron element. K87 and K113 each carry N6-acetyllysine. The residue at position 141 (T141) is a Phosphothreonine.

This sequence belongs to the cytochrome c oxidase subunit 5A family. In terms of assembly, component of the cytochrome c oxidase (complex IV, CIV), a multisubunit enzyme composed of 14 subunits. The complex is composed of a catalytic core of 3 subunits MT-CO1, MT-CO2 and MT-CO3, encoded in the mitochondrial DNA, and 11 supernumerary subunits COX4I, COX5A, COX5B, COX6A, COX6B, COX6C, COX7A, COX7B, COX7C, COX8 and NDUFA4, which are encoded in the nuclear genome. The complex exists as a monomer or a dimer and forms supercomplexes (SCs) in the inner mitochondrial membrane with NADH-ubiquinone oxidoreductase (complex I, CI) and ubiquinol-cytochrome c oxidoreductase (cytochrome b-c1 complex, complex III, CIII), resulting in different assemblies (supercomplex SCI(1)III(2)IV(1) and megacomplex MCI(2)III(2)IV(2)). Interacts with AFG1L. Interacts with RAB5IF. In terms of processing, in response to mitochondrial stress, the precursor protein is ubiquitinated by the SIFI complex in the cytoplasm before mitochondrial import, leading to its degradation. Within the SIFI complex, UBR4 initiates ubiquitin chain that are further elongated or branched by KCMF1.

The protein resides in the mitochondrion inner membrane. It participates in energy metabolism; oxidative phosphorylation. Functionally, component of the cytochrome c oxidase, the last enzyme in the mitochondrial electron transport chain which drives oxidative phosphorylation. The respiratory chain contains 3 multisubunit complexes succinate dehydrogenase (complex II, CII), ubiquinol-cytochrome c oxidoreductase (cytochrome b-c1 complex, complex III, CIII) and cytochrome c oxidase (complex IV, CIV), that cooperate to transfer electrons derived from NADH and succinate to molecular oxygen, creating an electrochemical gradient over the inner membrane that drives transmembrane transport and the ATP synthase. Cytochrome c oxidase is the component of the respiratory chain that catalyzes the reduction of oxygen to water. Electrons originating from reduced cytochrome c in the intermembrane space (IMS) are transferred via the dinuclear copper A center (CU(A)) of subunit 2 and heme A of subunit 1 to the active site in subunit 1, a binuclear center (BNC) formed by heme A3 and copper B (CU(B)). The BNC reduces molecular oxygen to 2 water molecules using 4 electrons from cytochrome c in the IMS and 4 protons from the mitochondrial matrix. This chain is Cytochrome c oxidase subunit 5A, mitochondrial (COX5A), found in Saimiri sciureus (Common squirrel monkey).